A 295-amino-acid polypeptide reads, in one-letter code: 2S seed storage protein (295 aa).

The signal sequence occupies residues 1–20; sequence MAKQIVLALAFAALVAFATA. Residues 21–161 constitute a propeptide that is removed on maturation; sequence HTTIITTTIE…TITTTVTESN (141 aa). Over residues 195–208 the composition is skewed to polar residues; that stretch reads EQQMQQSPRSTRPY. Positions 195–215 are disordered; the sequence is EQQMQQSPRSTRPYQQRPGQQ.

The protein belongs to the 2S seed storage albumins family. The 38 kDa precursor may be cleaved into two polypeptides of approximately the same size. The mature protein is composed of a single polypeptide containing one or more intra-molecular disulfide linkages.

Its function is as follows. This is a 2S seed storage protein. The sequence is that of 2S seed storage protein (HAG5) from Helianthus annuus (Common sunflower).